The following is a 904-amino-acid chain: Thiamine diphosphate dependent-3-acetyloctanal synthase PigD (904 aa).

The disordered stretch occupies residues 879–904 (RKAWAAQQPESTSTAFDQDPTQEATS). Positions 886 to 904 (QPESTSTAFDQDPTQEATS) are enriched in polar residues.

It belongs to the TPP enzyme family. Thiamine diphosphate serves as cofactor.

The catalysed reaction is (2E)-octenal + pyruvate + H(+) = (S)-3-acetyloctanal + CO2. It functions in the pathway antibiotic biosynthesis; prodigiosin biosynthesis. Functionally, involved in the biosynthesis of 2-methyl-3-n-amyl-pyrrole (MAP), one of the terminal products involved in the biosynthesis of the red antibiotic prodigiosin (Pig). Catalyzes the decarboxylation of pyruvate, followed by the modification of the resulting two-carbon fragment acetaldehyde at the C3 position of the 2-octenal (1,2-addition of acetaldehyde) giving 3-acetyloctanal. In vitro, it can act on a number of alpha,beta-unsaturated carbonyl compounds, including aldehydes and ketones, and can catalyze both 1,2-addition and Stetter-type 1,4-addition depending on the substrate. This Serratia marcescens protein is Thiamine diphosphate dependent-3-acetyloctanal synthase PigD.